The following is a 113-amino-acid chain: Putative membrane protein insertion efficiency factor (113 aa).

It belongs to the UPF0161 family.

It is found in the cell inner membrane. In terms of biological role, could be involved in insertion of integral membrane proteins into the membrane. The chain is Putative membrane protein insertion efficiency factor from Campylobacter curvus (strain 525.92).